The following is a 483-amino-acid chain: Zinc metalloproteinase/disintegrin (483 aa).

A signal peptide spans 1–20 (MIQVLLVTLCLAAFPYQGSS). The propeptide occupies 21–190 (IILESGNVND…KKASQLNLTP (170 aa)). One can recognise a Peptidase M12B domain in the interval 198–394 (RYIELVVVAD…HNPQCMLNEP (197 aa)). Ca(2+) contacts are provided by E201 and D285. Disulfide bonds link C309–C389, C349–C373, and C351–C356. Residue H334 coordinates Zn(2+). Residue E335 is part of the active site. Positions 338 and 344 each coordinate Zn(2+). The Ca(2+) site is built by C389 and N392. Positions 395–418 (LRTDIVSTPVSGNELLETGEESDF) are excised as a propeptide. The 82-residue stretch at 402–483 (TPVSGNELLE…AGCPRNPFHA (82 aa)) folds into the Disintegrin domain. Intrachain disulfides connect C425-C448, C439-C445, C444-C469, and C457-C476. The Cell attachment site motif lies at 461 to 463 (RGD).

This sequence belongs to the venom metalloproteinase (M12B) family. P-II subfamily. P-IId sub-subfamily. Homodimer; disulfide-linked (disintegrin). Zn(2+) serves as cofactor. As to expression, expressed by the venom gland.

The protein localises to the secreted. In terms of biological role, impairs hemostasis in the envenomed animal. This protein has not been identified in the venom. Functionally, inhibits ADP-induced platelet aggregation. Binds and inhibits integrins GPIIb/GPIIIa (ITGA2B/ITGB3), alpha-5/beta-1 (ITGA5/ITGB1), alpha-V/beta-3 (ITGAV/ITGB3), and alpha-V/beta-5 (ITGAV/ITGB5). It blocks cancer cell adhesion (tested on human breast cancer cell line MDA-MB-435) to fibronectin and vitronectin and thus prevents invasion of cancer cells. This chain is Zinc metalloproteinase/disintegrin, found in Agkistrodon contortrix contortrix (Southern copperhead).